The chain runs to 188 residues: Elongation factor P (188 aa).

The protein belongs to the elongation factor P family.

The protein localises to the cytoplasm. The protein operates within protein biosynthesis; polypeptide chain elongation. In terms of biological role, involved in peptide bond synthesis. Stimulates efficient translation and peptide-bond synthesis on native or reconstituted 70S ribosomes in vitro. Probably functions indirectly by altering the affinity of the ribosome for aminoacyl-tRNA, thus increasing their reactivity as acceptors for peptidyl transferase. In Phenylobacterium zucineum (strain HLK1), this protein is Elongation factor P.